The primary structure comprises 131 residues: Phosphoribosyl-AMP cyclohydrolase (131 aa).

D89 contributes to the Mg(2+) binding site. Position 90 (C90) interacts with Zn(2+). Residues D91 and D93 each coordinate Mg(2+). Residues C106 and C113 each coordinate Zn(2+).

This sequence belongs to the PRA-CH family. In terms of assembly, homodimer. The cofactor is Mg(2+). Zn(2+) serves as cofactor.

The protein localises to the cytoplasm. The enzyme catalyses 1-(5-phospho-beta-D-ribosyl)-5'-AMP + H2O = 1-(5-phospho-beta-D-ribosyl)-5-[(5-phospho-beta-D-ribosylamino)methylideneamino]imidazole-4-carboxamide. It participates in amino-acid biosynthesis; L-histidine biosynthesis; L-histidine from 5-phospho-alpha-D-ribose 1-diphosphate: step 3/9. In terms of biological role, catalyzes the hydrolysis of the adenine ring of phosphoribosyl-AMP. The chain is Phosphoribosyl-AMP cyclohydrolase from Pyrobaculum aerophilum (strain ATCC 51768 / DSM 7523 / JCM 9630 / CIP 104966 / NBRC 100827 / IM2).